Reading from the N-terminus, the 58-residue chain is Photosystem II reaction center protein K (58 aa).

The propeptide occupies 1–21; that stretch reads MLAIFNIYLDNAFHLNGIILA. Residues 29–49 traverse the membrane as a helical segment; the sequence is IFDPIVDVMPIIPVFFFLLAF.

This sequence belongs to the PsbK family. As to quaternary structure, PSII is composed of 1 copy each of membrane proteins PsbA, PsbB, PsbC, PsbD, PsbE, PsbF, PsbH, PsbI, PsbJ, PsbK, PsbL, PsbM, PsbT, PsbX, PsbY, PsbZ, Psb30/Ycf12, at least 3 peripheral proteins of the oxygen-evolving complex and a large number of cofactors. It forms dimeric complexes.

Its subcellular location is the plastid. The protein localises to the chloroplast thylakoid membrane. In terms of biological role, one of the components of the core complex of photosystem II (PSII). PSII is a light-driven water:plastoquinone oxidoreductase that uses light energy to abstract electrons from H(2)O, generating O(2) and a proton gradient subsequently used for ATP formation. It consists of a core antenna complex that captures photons, and an electron transfer chain that converts photonic excitation into a charge separation. The chain is Photosystem II reaction center protein K from Physcomitrium patens (Spreading-leaved earth moss).